Here is a 113-residue protein sequence, read N- to C-terminus: uncharacterized protein (113 aa).

The interval 31–113 is disordered; the sequence is SNNNNNNNNN…YSPTKFNLQY (83 aa). The segment covering 32–98 has biased composition (low complexity); that stretch reads NNNNNNNNNN…NNNNNNNNNN (67 aa). Over residues 99 to 113 the composition is skewed to polar residues; that stretch reads SSSFEYSPTKFNLQY.

This is an uncharacterized protein from Dictyostelium discoideum (Social amoeba).